The following is a 449-amino-acid chain: Neurexin-1a-beta (449 aa).

A signal peptide spans 1–38; sequence MLRLWPGGAPGGLASILLRISLRLALWLPPLTLGSALA. Topologically, residues 39 to 373 are extracellular; the sequence is EGPGELYVPQ…EVIRESSSTT (335 aa). Positions 71–272 constitute a Laminin G-like domain; it reads TTYIFGRDGG…DPNVRVEGSA (202 aa). Residues 276-366 form a disordered region; sequence GDMPSSSITP…AKGYPSPEVI (91 aa). Residues 280-311 show a composition bias toward low complexity; that stretch reads SSSITPQSSVSAAGNRSETSPSITDITTTTAS. Residues 312-322 show a composition bias toward polar residues; that stretch reads NRQGKQTTTPQ. The helical transmembrane segment at 374–394 threads the bilayer; that stretch reads GMVVGIVAAAALCILILLYAM. The Cytoplasmic segment spans residues 395–449; it reads YKYRNRDEGSYHVDESRNYISNSATQPNGAAVKEKPIGVPKNKKDKKNKDKEYYV. The segment at 415–449 is disordered; it reads SNSATQPNGAAVKEKPIGVPKNKKDKKNKDKEYYV.

The protein belongs to the neurexin family.

Its subcellular location is the membrane. Neuronal cell surface protein that may be involved in cell recognition and cell adhesion. May play a role in formation or maintenance of synaptic junctions. The protein is Neurexin-1a-beta (nrxn1a) of Danio rerio (Zebrafish).